The chain runs to 299 residues: GTPase Era (299 aa).

One can recognise an Era-type G domain in the interval lysine 5–glutamate 172. The G1 stretch occupies residues glycine 13–serine 20. Glycine 13–serine 20 lines the GTP pocket. The segment at glutamine 39–asparagine 43 is G2. The G3 stretch occupies residues aspartate 60–glycine 63. GTP is bound by residues aspartate 60–isoleucine 64 and asparagine 122–aspartate 125. The interval asparagine 122–aspartate 125 is G4. The interval isoleucine 151 to alanine 153 is G5. One can recognise a KH type-2 domain in the interval threonine 203 to arginine 280.

It belongs to the TRAFAC class TrmE-Era-EngA-EngB-Septin-like GTPase superfamily. Era GTPase family. In terms of assembly, monomer.

The protein resides in the cytoplasm. It localises to the cell membrane. In terms of biological role, an essential GTPase that binds both GDP and GTP, with rapid nucleotide exchange. Plays a role in 16S rRNA processing and 30S ribosomal subunit biogenesis and possibly also in cell cycle regulation and energy metabolism. The protein is GTPase Era of Staphylococcus aureus (strain Mu3 / ATCC 700698).